Here is a 550-residue protein sequence, read N- to C-terminus: Carboxypeptidase Y homolog A (550 aa).

The first 18 residues, 1–18 (MKSLVLGLLVGSAIASGP), serve as a signal peptide directing secretion. Positions 19 to 131 (LQHVLHAPPD…KLSQYDLRIK (113 aa)) are excised as a propeptide. The interval 20-39 (QHVLHAPPDPEPKPEPEPQV) is disordered. 5 disulfides stabilise this stretch: Cys-185–Cys-424, Cys-319–Cys-333, Cys-343–Cys-366, Cys-350–Cys-359, and Cys-388–Cys-394. Asn-203 and Asn-216 each carry an N-linked (GlcNAc...) asparagine glycan. Ser-272 is a catalytic residue. The N-linked (GlcNAc...) asparagine glycan is linked to Asn-289. An N-linked (GlcNAc...) asparagine glycan is attached at Asn-387. Asp-463 is an active-site residue. Asn-493 and Asn-514 each carry an N-linked (GlcNAc...) asparagine glycan. Residue His-525 is part of the active site.

It belongs to the peptidase S10 family.

It localises to the vacuole. The catalysed reaction is Release of a C-terminal amino acid with broad specificity.. Vacuolar carboxypeptidase involved in degradation of small peptides. Digests preferentially peptides containing an aliphatic or hydrophobic residue in P1' position, as well as methionine, leucine or phenylalanine in P1 position of ester substrate. This Paracoccidioides brasiliensis (strain Pb18) protein is Carboxypeptidase Y homolog A (CPYA).